The following is a 1048-amino-acid chain: Platelet-derived growth factor receptor beta (1048 aa).

Positions 1–30 are cleaved as a signal peptide; sequence MLRASAMRAAVLHLTVALAALLSSCTTVSC. Over 31-528 the chain is Extracellular; the sequence is LKIVPEEKQL…LVSSSLFSQV (498 aa). In terms of domain architecture, Ig-like C2-type 1 spans 35 to 124; the sequence is PEEKQLILAE…EIKEVAVFVP (90 aa). 2 disulfide bridges follow: Cys52–Cys108 and Cys153–Cys194. Asn87, Asn159, Asn224, and Asn239 each carry an N-linked (GlcNAc...) asparagine glycan. Ig-like C2-type domains lie at 216 to 309 and 319 to 406; these read PEDI…ASVN and AVKS…KEVT. Cysteines 240 and 293 form a disulfide. N-linked (GlcNAc...) asparagine glycans are attached at residues Asn309, Asn327, and Asn457. A disulfide bridge links Cys434 with Cys503. A helical membrane pass occupies residues 529-549; the sequence is VLLAVVLTLVPIIIMSIIILI. Residues 550–1048 lie on the Cytoplasmic side of the membrane; it reads AVWKKKPRYE…PIPDPKPEKS (499 aa). A phosphotyrosine; by autocatalysis mark is found at Tyr558, Tyr575, and Tyr577. One can recognise a Protein kinase domain in the interval 596–957; the sequence is LVLGRTLGSG…FLVHCVGDML (362 aa). Residues 602-610 and Lys630 contribute to the ATP site; that span reads LGSGAFGRV. Tyr735, Tyr746, Tyr758, Tyr766, and Tyr770 each carry phosphotyrosine; by autocatalysis. Residue Asp821 is the Proton acceptor of the active site. 2 positions are modified to phosphotyrosine; by autocatalysis: Tyr852 and Tyr1036.

It belongs to the protein kinase superfamily. Tyr protein kinase family. CSF-1/PDGF receptor subfamily. Interacts with homodimeric PDGFB and PDGFD, and with heterodimers formed by PDGFA and PDGFB. Monomer in the absence of bound ligand. Interaction with homodimeric PDGFB, heterodimers formed by PDGFA and PDGFB or homodimeric PDGFD, leads to receptor dimerization, where both PDGFRA homodimers and heterodimers with PDGFRB are observed. In terms of processing, ubiquitinated. After autophosphorylation, the receptor is polyubiquitinated, leading to its degradation. Post-translationally, autophosphorylated on tyrosine residues upon ligand binding. Autophosphorylation occurs in trans, i.e. one subunit of the dimeric receptor phosphorylates tyrosine residues on the other subunit.

The protein resides in the cell membrane. The protein localises to the cytoplasmic vesicle. It is found in the lysosome lumen. The enzyme catalyses L-tyrosyl-[protein] + ATP = O-phospho-L-tyrosyl-[protein] + ADP + H(+). Present in an inactive conformation in the absence of bound ligand. Binding of PDGFB and/or PDGFD leads to dimerization and activation by autophosphorylation on tyrosine residues. Its function is as follows. Tyrosine-protein kinase that acts as a cell-surface receptor for homodimeric PDGFB and PDGFD and for heterodimers formed by PDGFA and PDGFB, and plays an essential role in the regulation of embryonic development, cell proliferation, survival, differentiation, chemotaxis and migration. Plays an essential role in blood vessel development by promoting proliferation, migration and recruitment of pericytes and smooth muscle cells to endothelial cells. Required for normal development of the cardiovascular system. Required for normal recruitment of pericytes (mesangial cells) in the kidney glomerulus, and for normal formation of a branched network of capillaries in kidney glomeruli. Promotes rearrangement of the actin cytoskeleton and the formation of membrane ruffles. Binding of its cognate ligands - homodimeric PDGFB, heterodimers formed by PDGFA and PDGFB or homodimeric PDGFD -leads to the activation of several signaling cascades; the response depends on the nature of the bound ligand and is modulated by the formation of heterodimers between PDGFRA and PDGFRB. Receptor signaling is down-regulated by protein phosphatases that dephosphorylate the receptor and its down-stream effectors, and by rapid internalization of the activated receptor. This Takifugu rubripes (Japanese pufferfish) protein is Platelet-derived growth factor receptor beta (pdgfrb).